Here is a 290-residue protein sequence, read N- to C-terminus: Elongation factor Ts (290 aa).

Residues 83–86 (TDFV) form an involved in Mg(2+) ion dislocation from EF-Tu region.

Belongs to the EF-Ts family.

The protein resides in the cytoplasm. Its function is as follows. Associates with the EF-Tu.GDP complex and induces the exchange of GDP to GTP. It remains bound to the aminoacyl-tRNA.EF-Tu.GTP complex up to the GTP hydrolysis stage on the ribosome. The sequence is that of Elongation factor Ts (tsf) from Aquifex aeolicus (strain VF5).